Reading from the N-terminus, the 205-residue chain is Large ribosomal subunit protein uL4 (205 aa).

The interval 43–96 (GKRQGTSKVKNRSAVRGGGKKPWRQKGTGRARQGSIRSPQWRGGGTVFGPTPRS) is disordered. The span at 51–71 (VKNRSAVRGGGKKPWRQKGTG) shows a compositional bias: basic residues.

Belongs to the universal ribosomal protein uL4 family. As to quaternary structure, part of the 50S ribosomal subunit.

In terms of biological role, one of the primary rRNA binding proteins, this protein initially binds near the 5'-end of the 23S rRNA. It is important during the early stages of 50S assembly. It makes multiple contacts with different domains of the 23S rRNA in the assembled 50S subunit and ribosome. Forms part of the polypeptide exit tunnel. In Lactobacillus helveticus (strain DPC 4571), this protein is Large ribosomal subunit protein uL4.